Consider the following 1097-residue polypeptide: Leukemia inhibitory factor receptor (1097 aa).

The N-terminal stretch at 1 to 44 (MMNISLRLRRPPWMVDSNGRRMTSHFQWLLLTFILLYLMNQVTS) is a signal peptide. The Extracellular portion of the chain corresponds to 45–833 (EKRGAPRDLK…SMFVVTKENS (789 aa)). The region spanning 46 to 131 (KRGAPRDLKC…ISKFTLNEKN (86 aa)) is the Fibronectin type-III 1 domain. 2 disulfides stabilise this stretch: cysteine 55/cysteine 65 and cysteine 82/cysteine 90. 6 N-linked (GlcNAc...) asparagine glycosylation sites follow: asparagine 85, asparagine 131, asparagine 143, asparagine 191, asparagine 243, and asparagine 303. Cysteine 213 and cysteine 270 form a disulfide bridge. 5 consecutive Fibronectin type-III domains span residues 332-434 (PPDI…VYPR), 435-534 (IPTS…TEAI), 538-629 (GPDT…IPND), 627-719 (PNDD…IGYI), and 724-833 (PIVA…KENS). Cysteine 341 and cysteine 351 are disulfide-bonded. Residues asparagine 366, asparagine 390, asparagine 407, asparagine 426, asparagine 445, asparagine 471, asparagine 481, and asparagine 489 are each glycosylated (N-linked (GlcNAc...) asparagine). Cysteines 466 and 511 form a disulfide. Residues 519–523 (WSKWS) carry the WSXWS motif motif. N-linked (GlcNAc...) asparagine glycosylation is found at asparagine 572, asparagine 652, asparagine 663, asparagine 680, asparagine 729, and asparagine 787. Residues 834 to 854 (VGLIIAILIPVAVAVIVGVVT) form a helical membrane-spanning segment. At 855–1097 (SILCYRKREW…TNFFQNKPND (243 aa)) the chain is on the cytoplasmic side. The Box 1 motif signature appears at 869-877 (FYPDIPNPE). Serine 927 bears the Phosphoserine mark. 2 disordered regions span residues 982–1005 (QPQA…KPQM) and 1022–1097 (LDKA…KPND). 2 stretches are compositionally biased toward polar residues: residues 1032–1067 (ANVN…NSRQ) and 1086–1097 (SFTNFFQNKPND). Phosphoserine is present on serine 1044.

The protein belongs to the type I cytokine receptor family. Type 2 subfamily. In terms of assembly, heterodimer composed of LIFR and IL6ST. The heterodimer formed by LIFR and IL6ST interacts with the complex formed by CNTF and CNTFR.

The protein localises to the cell membrane. In terms of biological role, signal-transducing molecule. May have a common pathway with IL6ST. The soluble form inhibits the biological activity of LIF by blocking its binding to receptors on target cells. The protein is Leukemia inhibitory factor receptor (LIFR) of Canis lupus familiaris (Dog).